The primary structure comprises 570 residues: Formate--tetrahydrofolate ligase (570 aa).

Residue 65-72 (TPHGEGKT) coordinates ATP.

This sequence belongs to the formate--tetrahydrofolate ligase family.

It carries out the reaction (6S)-5,6,7,8-tetrahydrofolate + formate + ATP = (6R)-10-formyltetrahydrofolate + ADP + phosphate. It participates in one-carbon metabolism; tetrahydrofolate interconversion. In Shewanella oneidensis (strain ATCC 700550 / JCM 31522 / CIP 106686 / LMG 19005 / NCIMB 14063 / MR-1), this protein is Formate--tetrahydrofolate ligase.